Reading from the N-terminus, the 733-residue chain is Photosystem I P700 chlorophyll a apoprotein A2 (733 aa).

The next 8 membrane-spanning stretches (helical) occupy residues 46–69 (IFASHFGHLAVIFLWTAGNLFHVA), 134–157 (LYLGSVGLLILASVLLFAGWLHLQ), 174–198 (LNHHLSGLLGVSSLAWTGHIVHVAI), 272–290 (IAHHQLAIAVVFIVAGHMY), 329–352 (LHMQLGLALACLGVATSLTAQHMY), 368–394 (AALYTHHQYIAGFLMVGAFAHGAIFFV), 416–438 (AIISHLSWASLFLGFHTLGLYIH), and 516–534 (FLVHHAIALGLHTTTLILV). [4Fe-4S] cluster-binding residues include Cys-558 and Cys-567. 2 helical membrane passes run 574 to 595 (AFYLAMFWMLNTIGWVTFYWHW) and 642 to 664 (LSVWAWMFLFGHLIWATGFMFLI). Chlorophyll a is bound by residues His-653, Met-661, and Tyr-669. Residue Trp-670 participates in phylloquinone binding. A helical transmembrane segment spans residues 706–726 (LVGLVHFTVGYVLTYAAFVIA).

The protein belongs to the PsaA/PsaB family. The PsaA/B heterodimer binds the P700 chlorophyll special pair and subsequent electron acceptors. PSI consists of a core antenna complex that captures photons, and an electron transfer chain that converts photonic excitation into a charge separation. The eukaryotic PSI reaction center is composed of at least 11 subunits. P700 is a chlorophyll a/chlorophyll a' dimer, A0 is one or more chlorophyll a, A1 is one or both phylloquinones and FX is a shared 4Fe-4S iron-sulfur center. serves as cofactor.

Its subcellular location is the plastid. The protein resides in the chloroplast thylakoid membrane. The enzyme catalyses reduced [plastocyanin] + hnu + oxidized [2Fe-2S]-[ferredoxin] = oxidized [plastocyanin] + reduced [2Fe-2S]-[ferredoxin]. In terms of biological role, psaA and PsaB bind P700, the primary electron donor of photosystem I (PSI), as well as the electron acceptors A0, A1 and FX. PSI is a plastocyanin/cytochrome c6-ferredoxin oxidoreductase, converting photonic excitation into a charge separation, which transfers an electron from the donor P700 chlorophyll pair to the spectroscopically characterized acceptors A0, A1, FX, FA and FB in turn. Oxidized P700 is reduced on the lumenal side of the thylakoid membrane by plastocyanin or cytochrome c6. The polypeptide is Photosystem I P700 chlorophyll a apoprotein A2 (Phaeodactylum tricornutum (strain CCAP 1055/1)).